The sequence spans 64 residues: Conotoxin Pn-B01122 (64 aa).

The signal sequence occupies residues 1–22 (MRCLPVFVILLLLIASAPSVDA). A propeptide spanning residues 23–48 (RPKTKDDIPLVSFQDNAKRALQILSN) is cleaved from the precursor.

Belongs to the conotoxin T superfamily. Contains 2 disulfide bonds that can be either 'C1-C3, C2-C4' or 'C1-C4, C2-C3', since these disulfide connectivities have been observed for conotoxins with cysteine framework V (for examples, see AC P0DQQ7 and AC P81755). In terms of tissue distribution, expressed by the venom duct.

It is found in the secreted. This chain is Conotoxin Pn-B01122, found in Conus pennaceus (Feathered cone).